We begin with the raw amino-acid sequence, 166 residues long: Large ribosomal subunit protein uL10 (166 aa).

This sequence belongs to the universal ribosomal protein uL10 family. In terms of assembly, part of the ribosomal stalk of the 50S ribosomal subunit. The N-terminus interacts with L11 and the large rRNA to form the base of the stalk. The C-terminus forms an elongated spine to which L12 dimers bind in a sequential fashion forming a multimeric L10(L12)X complex.

Forms part of the ribosomal stalk, playing a central role in the interaction of the ribosome with GTP-bound translation factors. This chain is Large ribosomal subunit protein uL10, found in Ureaplasma urealyticum serovar 10 (strain ATCC 33699 / Western).